Here is a 61-residue protein sequence, read N- to C-terminus: Large ribosomal subunit protein uL29 (61 aa).

This sequence belongs to the universal ribosomal protein uL29 family.

This Nitratidesulfovibrio vulgaris (strain DSM 19637 / Miyazaki F) (Desulfovibrio vulgaris) protein is Large ribosomal subunit protein uL29.